The sequence spans 392 residues: Stilbene synthase 3 (392 aa).

Position 55–58 (lysine 55–arginine 58) interacts with substrate. The active site involves cysteine 164. Residues leucine 267 and glycine 305 to proline 307 each bind substrate.

This sequence belongs to the thiolase-like superfamily. Chalcone/stilbene synthases family. Homodimer.

The protein localises to the cytoplasm. It carries out the reaction 4-coumaroyl-CoA + 3 malonyl-CoA + 3 H(+) = trans-resveratrol + 4 CO2 + 4 CoA. It functions in the pathway phytoalexin biosynthesis; 3,4',5-trihydroxystilbene biosynthesis; 3,4',5-trihydroxystilbene from trans-4-coumarate: step 2/2. Functionally, mediates resistance to pathogens which are sensitive to stilbenes. The sequence is that of Stilbene synthase 3 from Vitis vinifera (Grape).